Here is a 189-residue protein sequence, read N- to C-terminus: Peptidyl-tRNA hydrolase (189 aa).

TRNA is bound at residue Y14. H19 functions as the Proton acceptor in the catalytic mechanism. The tRNA site is built by Y64, N66, and N112.

Belongs to the PTH family. As to quaternary structure, monomer.

Its subcellular location is the cytoplasm. It carries out the reaction an N-acyl-L-alpha-aminoacyl-tRNA + H2O = an N-acyl-L-amino acid + a tRNA + H(+). Functionally, hydrolyzes ribosome-free peptidyl-tRNAs (with 1 or more amino acids incorporated), which drop off the ribosome during protein synthesis, or as a result of ribosome stalling. Catalyzes the release of premature peptidyl moieties from peptidyl-tRNA molecules trapped in stalled 50S ribosomal subunits, and thus maintains levels of free tRNAs and 50S ribosomes. This is Peptidyl-tRNA hydrolase from Clostridium botulinum (strain 657 / Type Ba4).